Here is a 471-residue protein sequence, read N- to C-terminus: SVGFKAGVKEYKLTYYTPEYETKDTDILAAFRVTPQPGVPPEEAGAAVRAESSTGTWTTVWTDGLTSLDRYKGRCYHIEPVLGEEDQYIAYVAYPLDLFEEGSVTNMFTSIVGNVFGFKALRALRLEDLRVPTAYIKTFQGPPHGIQVERDKLNKYGRPLLGCTIKPKLGLSAKNYGRAVYECLRGGLDFTKDDENVNSQPFMRWRDRFLFCAEALFKAQAETGEIKGHYLNATAGTCEEMMKRAVFARELGAPIVMHDYLTGGFTANTSLAHYCRDNGLLLHIHRAMHAVIDRQKNHGMHFRVLAKALRLSGGDHVHAGTVVGKLEGERDITLGFVDLLRDDFVEKDRSRGIYFTQDWVSLPGVLAVRSGGIHVWHMPALTEIFGDDSVLQFGGGTLGHPWGNAPGAVANRVALEACVKARNEGRDLAAEGNEIIREASKWSPELAAACEVWKAIRFNFKAVDTLDPERE.

K5 is subject to N6,N6,N6-trimethyllysine. Substrate contacts are provided by N114 and T164. The active-site Proton acceptor is K166. Position 168 (K168) interacts with substrate. The Mg(2+) site is built by K192, D194, and E195. N6-carboxylysine is present on K192. The active-site Proton acceptor is H285. 3 residues coordinate substrate: R286, H318, and S370.

It belongs to the RuBisCO large chain family. Type I subfamily. Heterohexadecamer of 8 large chains and 8 small chains; disulfide-linked. The disulfide link is formed within the large subunit homodimers. Requires Mg(2+) as cofactor. In terms of processing, the disulfide bond which can form in the large chain dimeric partners within the hexadecamer appears to be associated with oxidative stress and protein turnover.

Its subcellular location is the plastid. It is found in the chloroplast. The catalysed reaction is 2 (2R)-3-phosphoglycerate + 2 H(+) = D-ribulose 1,5-bisphosphate + CO2 + H2O. It carries out the reaction D-ribulose 1,5-bisphosphate + O2 = 2-phosphoglycolate + (2R)-3-phosphoglycerate + 2 H(+). Functionally, ruBisCO catalyzes two reactions: the carboxylation of D-ribulose 1,5-bisphosphate, the primary event in carbon dioxide fixation, as well as the oxidative fragmentation of the pentose substrate in the photorespiration process. Both reactions occur simultaneously and in competition at the same active site. The polypeptide is Ribulose bisphosphate carboxylase large chain (Deppea grandiflora).